The following is a 446-amino-acid chain: Sphingomyelinase phosphodiesterase C (446 aa).

An N-terminal signal peptide occupies residues 1 to 26 (MKFRNNLTLYLIFIIVFTIYISLTIS). N-linked (GlcNAc...) asparagine glycosylation is present at asparagine 6. Residues aspartate 39 and histidine 41 each coordinate Zn(2+). Residues cysteine 56 and cysteine 78 are joined by a disulfide bond. Aspartate 107 is a Zn(2+) binding site. N-linked (GlcNAc...) asparagine glycosylation is found at asparagine 118 and asparagine 128. Residue asparagine 148 coordinates Zn(2+). Residues asparagine 178, asparagine 217, asparagine 229, and asparagine 234 are each glycosylated (N-linked (GlcNAc...) asparagine). Histidine 247, histidine 287, and histidine 289 together coordinate Zn(2+). Residues asparagine 342 and asparagine 357 are each glycosylated (N-linked (GlcNAc...) asparagine). An intrachain disulfide couples cysteine 429 to cysteine 442.

It belongs to the acid sphingomyelinase family. Requires Zn(2+) as cofactor.

The protein localises to the secreted. This chain is Sphingomyelinase phosphodiesterase C (sgmC), found in Dictyostelium discoideum (Social amoeba).